Reading from the N-terminus, the 399-residue chain is Zinc finger TRAF-type-containing protein 1 (399 aa).

The span at 1-13 (MSGAEEAGGGGPA) shows a compositional bias: gly residues. Residues 1–21 (MSGAEEAGGGGPAAGPAGAVP) form a disordered region. The segment at 106–151 (CTVCLDLPKASVYQCTNGHLMCAGCFIHLLADARLKEEQATCPNCR) adopts an RING-type; degenerate zinc-finger fold. The TRAF-type zinc finger occupies 152–210 (CEISKSLCCRNLAVEKAVSELPSECGFCLRQFPRSLLERHQKEECQDRVTQCKYKRIGC).

It belongs to the ZFTRAF1 family. Interacts with LGALS3. As to expression, expressed in heart, brain, liver, testis and kidney.

Its subcellular location is the cytoplasm. It localises to the perinuclear region. This chain is Zinc finger TRAF-type-containing protein 1, found in Mus musculus (Mouse).